Here is a 1098-residue protein sequence, read N- to C-terminus: Protein translocase subunit SecA (1098 aa).

ATP-binding positions include Q176, 194-198, and D696; that span reads GEGKT. The interval 1024–1098 is disordered; that stretch reads EPEQVREAAP…KYKNCHGQNA (75 aa). 2 stretches are compositionally biased toward basic and acidic residues: residues 1041-1051 and 1058-1077; these read QYREEKQDLSD and AEHD…KTVG. C1082, C1084, C1093, and H1094 together coordinate Zn(2+).

The protein belongs to the SecA family. Monomer and homodimer. Part of the essential Sec protein translocation apparatus which comprises SecA, SecYEG and auxiliary proteins SecDF. Other proteins may also be involved. Zn(2+) is required as a cofactor.

The protein resides in the cell inner membrane. Its subcellular location is the cytoplasm. It carries out the reaction ATP + H2O + cellular proteinSide 1 = ADP + phosphate + cellular proteinSide 2.. Part of the Sec protein translocase complex. Interacts with the SecYEG preprotein conducting channel. Has a central role in coupling the hydrolysis of ATP to the transfer of proteins into and across the cell membrane, serving as an ATP-driven molecular motor driving the stepwise translocation of polypeptide chains across the membrane. The polypeptide is Protein translocase subunit SecA (Phocaeicola vulgatus (strain ATCC 8482 / DSM 1447 / JCM 5826 / CCUG 4940 / NBRC 14291 / NCTC 11154) (Bacteroides vulgatus)).